Consider the following 164-residue polypeptide: Cyanate hydratase (164 aa).

Residues R90, E93, and S116 contribute to the active site.

Belongs to the cyanase family.

It carries out the reaction cyanate + hydrogencarbonate + 3 H(+) = NH4(+) + 2 CO2. Functionally, catalyzes the reaction of cyanate with bicarbonate to produce ammonia and carbon dioxide. The polypeptide is Cyanate hydratase (Ricinus communis (Castor bean)).